The chain runs to 219 residues: MKSFVVAPFIVVIDGPAASGKGTLARRIATHYGMPHLDTGLTYRAVAKALLDKGLPLDDEALATDAALSLDLLAMDKAVLSAHAIGEAASKVAVMPAVRRALVEAQRHFANALPSSVLDGRDIGTVVCPDAAIKLFVTASPEVRARRRFDEVLARGDTADFAEILADLKKRDERDMNRTDSPLRPAEDAHLLDTSEMSIEAAFLAAKKLIDHALAQHRG.

15–23 (GPAASGKGT) serves as a coordination point for ATP.

This sequence belongs to the cytidylate kinase family. Type 1 subfamily.

Its subcellular location is the cytoplasm. The catalysed reaction is CMP + ATP = CDP + ADP. The enzyme catalyses dCMP + ATP = dCDP + ADP. This is Cytidylate kinase from Brucella melitensis biotype 1 (strain ATCC 23456 / CCUG 17765 / NCTC 10094 / 16M).